The sequence spans 471 residues: Trigger factor (471 aa).

The PPIase FKBP-type domain maps to 165-244 (GDFVSIDLRA…VQSVKERVLP (80 aa)). The disordered stretch occupies residues 407–471 (VTDASGNPVD…EATAEDPAKS (65 aa)). Over residues 416 to 443 (DLEELVGGTEEDDVTEDATEDVTEDAAP) the composition is skewed to acidic residues.

This sequence belongs to the FKBP-type PPIase family. Tig subfamily.

It is found in the cytoplasm. It catalyses the reaction [protein]-peptidylproline (omega=180) = [protein]-peptidylproline (omega=0). Functionally, involved in protein export. Acts as a chaperone by maintaining the newly synthesized protein in an open conformation. Functions as a peptidyl-prolyl cis-trans isomerase. This chain is Trigger factor, found in Kineococcus radiotolerans (strain ATCC BAA-149 / DSM 14245 / SRS30216).